A 652-amino-acid chain; its full sequence is Acetyl-coenzyme A synthetase (652 aa).

CoA-binding positions include 191–194 (RAGR), Thr-311, and Asn-335. Residues 387–389 (GEP), 411–416 (DTWWQT), Asp-500, and Arg-515 each bind ATP. Ser-523 contributes to the CoA binding site. Arg-526 contacts ATP. Mg(2+) is bound by residues Val-537, His-539, and Ile-542. Arg-584 provides a ligand contact to CoA. Lys-609 bears the N6-acetyllysine mark.

Belongs to the ATP-dependent AMP-binding enzyme family. Mg(2+) is required as a cofactor. Post-translationally, acetylated. Deacetylation by the SIR2-homolog deacetylase activates the enzyme.

It carries out the reaction acetate + ATP + CoA = acetyl-CoA + AMP + diphosphate. Catalyzes the conversion of acetate into acetyl-CoA (AcCoA), an essential intermediate at the junction of anabolic and catabolic pathways. Acs undergoes a two-step reaction. In the first half reaction, Acs combines acetate with ATP to form acetyl-adenylate (AcAMP) intermediate. In the second half reaction, it can then transfer the acetyl group from AcAMP to the sulfhydryl group of CoA, forming the product AcCoA. In terms of biological role, enables the cell to use acetate during aerobic growth to generate energy via the TCA cycle, and biosynthetic compounds via the glyoxylate shunt. Acetylates CheY, the response regulator involved in flagellar movement and chemotaxis. The sequence is that of Acetyl-coenzyme A synthetase from Escherichia coli O6:H1 (strain CFT073 / ATCC 700928 / UPEC).